The chain runs to 650 residues: uncharacterized protein (650 aa).

The protein belongs to the MG032/MG096/MG288 family.

This is an uncharacterized protein from Mycoplasma genitalium (strain ATCC 33530 / DSM 19775 / NCTC 10195 / G37) (Mycoplasmoides genitalium).